A 371-amino-acid polypeptide reads, in one-letter code: N-acetyllactosaminide alpha-2,3-sialyltransferase (371 aa).

Residue Gly255 coordinates CMP-N-acetyl-beta-neuraminate. The Proton acceptor role is filled by Asp258. CMP-N-acetyl-beta-neuraminate is bound by residues Ala278–Arg282, Ile299–Glu300, and Ser322–Gly323. His280 functions as the Proton donor in the catalytic mechanism.

Belongs to the glycosyltransferase 52 family. In terms of assembly, homodimer.

It is found in the cell outer membrane. The enzyme catalyses a beta-D-galactosyl-(1-&gt;4)-N-acetyl-beta-D-glucosaminyl derivative + CMP-N-acetyl-beta-neuraminate = an N-acetyl-alpha-neuraminyl-(2-&gt;3)-beta-D-galactosyl-(1-&gt;4)-N-acetyl-beta-D-glucosaminyl derivative + CMP + H(+). The protein operates within bacterial outer membrane biogenesis; lipooligosaccharide biosynthesis. In terms of biological role, catalyzes the transfer of sialic acid from the substrate CMP-N-acetylneuraminate to the terminal galactose residue of the lacto-N-neotetraose branch of surface lipooligosaccharide (LOS), forming an alpha-2,3-sialyl linkage. Thus, functions in the sialylation of LOS, which plays a role in the evasion of the host immune response by protecting N.meningitidis from complement-mediated serum killing and from phagocytic killing by neutrophils. The protein is N-acetyllactosaminide alpha-2,3-sialyltransferase of Neisseria meningitidis serogroup A / serotype 4A (strain DSM 15465 / Z2491).